We begin with the raw amino-acid sequence, 157 residues long: Endoribonuclease YbeY (157 aa).

Residues His-111, His-115, and His-121 each coordinate Zn(2+).

This sequence belongs to the endoribonuclease YbeY family. Requires Zn(2+) as cofactor.

The protein resides in the cytoplasm. Its function is as follows. Single strand-specific metallo-endoribonuclease involved in late-stage 70S ribosome quality control and in maturation of the 3' terminus of the 16S rRNA. This chain is Endoribonuclease YbeY, found in Pseudomonas putida (strain W619).